The primary structure comprises 340 residues: Protein RecA (340 aa).

65-72 (GPESGGKT) is a binding site for ATP.

The protein belongs to the RecA family.

It localises to the cytoplasm. Can catalyze the hydrolysis of ATP in the presence of single-stranded DNA, the ATP-dependent uptake of single-stranded DNA by duplex DNA, and the ATP-dependent hybridization of homologous single-stranded DNAs. It interacts with LexA causing its activation and leading to its autocatalytic cleavage. This chain is Protein RecA, found in Thermus thermophilus (strain ATCC BAA-163 / DSM 7039 / HB27).